The sequence spans 115 residues: MEAKIQFIKGLDEKVLPDVRLTRSKDGSTGTATFRFKNPNILDKTTAKEGEITGMYLIDEEGILETRDVNARFVNGKPEAIESIYIMKSPEAWDRFMRFMERYGETNGLVFSKAS.

This sequence belongs to the Psb28 family. Part of the photosystem II complex.

Its subcellular location is the plastid. The protein localises to the chloroplast thylakoid membrane. The protein is Photosystem II reaction center Psb28 protein of Phaeodactylum tricornutum (strain CCAP 1055/1).